Reading from the N-terminus, the 98-residue chain is NADH-ubiquinone oxidoreductase chain 4L (98 aa).

Transmembrane regions (helical) follow at residues 29–49 (SLLC…LLIL) and 61–81 (ILLL…LVTV).

This sequence belongs to the complex I subunit 4L family. As to quaternary structure, core subunit of respiratory chain NADH dehydrogenase (Complex I) which is composed of 45 different subunits.

Its subcellular location is the mitochondrion inner membrane. The enzyme catalyses a ubiquinone + NADH + 5 H(+)(in) = a ubiquinol + NAD(+) + 4 H(+)(out). Its function is as follows. Core subunit of the mitochondrial membrane respiratory chain NADH dehydrogenase (Complex I) which catalyzes electron transfer from NADH through the respiratory chain, using ubiquinone as an electron acceptor. Part of the enzyme membrane arm which is embedded in the lipid bilayer and involved in proton translocation. This chain is NADH-ubiquinone oxidoreductase chain 4L (MT-ND4L), found in Cheirogaleus medius (Fat-tailed dwarf lemur).